The sequence spans 455 residues: Ribulose bisphosphate carboxylase large chain (455 aa).

Lys5 carries the post-translational modification N6,N6,N6-trimethyllysine. Positions 114 and 164 each coordinate substrate. The active-site Proton acceptor is the Lys166. Lys168 lines the substrate pocket. Residues Lys192, Asp194, and Glu195 each contribute to the Mg(2+) site. An N6-carboxylysine modification is found at Lys192. Residue His285 is the Proton acceptor of the active site. The substrate site is built by Arg286, His318, and Ser370.

It belongs to the RuBisCO large chain family. Type I subfamily. Heterohexadecamer of 8 large chains and 8 small chains; disulfide-linked. The disulfide link is formed within the large subunit homodimers. Requires Mg(2+) as cofactor. The disulfide bond which can form in the large chain dimeric partners within the hexadecamer appears to be associated with oxidative stress and protein turnover.

It is found in the plastid. The protein resides in the chloroplast. It catalyses the reaction 2 (2R)-3-phosphoglycerate + 2 H(+) = D-ribulose 1,5-bisphosphate + CO2 + H2O. It carries out the reaction D-ribulose 1,5-bisphosphate + O2 = 2-phosphoglycolate + (2R)-3-phosphoglycerate + 2 H(+). In terms of biological role, ruBisCO catalyzes two reactions: the carboxylation of D-ribulose 1,5-bisphosphate, the primary event in carbon dioxide fixation, as well as the oxidative fragmentation of the pentose substrate in the photorespiration process. Both reactions occur simultaneously and in competition at the same active site. The sequence is that of Ribulose bisphosphate carboxylase large chain from Lupinus latifolius (Broad-leaved lupine).